The chain runs to 201 residues: dCTP deaminase, dUMP-forming (201 aa).

DCTP is bound by residues 117–122 (RSSFGR), aspartate 135, 143–145 (TLE), glutamine 163, tyrosine 177, and glutamine 188. The active-site Proton donor/acceptor is glutamate 145.

It belongs to the dCTP deaminase family. As to quaternary structure, homotrimer.

It catalyses the reaction dCTP + 2 H2O = dUMP + NH4(+) + diphosphate. It participates in pyrimidine metabolism; dUMP biosynthesis; dUMP from dCTP: step 1/1. In terms of biological role, bifunctional enzyme that catalyzes both the deamination of dCTP to dUTP and the hydrolysis of dUTP to dUMP without releasing the toxic dUTP intermediate. This Methanococcus aeolicus (strain ATCC BAA-1280 / DSM 17508 / OCM 812 / Nankai-3) protein is dCTP deaminase, dUMP-forming.